The following is a 204-amino-acid chain: Cytochrome bo(3) ubiquinol oxidase subunit 3 (204 aa).

The Cytoplasmic segment spans residues 1–31 (MATDTLTHATAHAHEHGHHDAGGTKIFGFWI). A helical transmembrane segment spans residues 32–50 (YLMSDCILFSILFATYAVL). Residues 51 to 66 (VNGTAGGPTGKDIFEL) are Periplasmic-facing. A helical transmembrane segment spans residues 67-85 (PFVLVETFLLLFSSITYGM). Topologically, residues 86 to 101 (AAIAMYKNNKSQVISW) are cytoplasmic. A helical membrane pass occupies residues 102 to 120 (LALTWLFGAGFIGMEIYEF). Over 121-142 (HHLIVNGMGPDRSGFLSAFFAL) the chain is Periplasmic. A helical membrane pass occupies residues 143-161 (VGTHGLHVTSGLIWMAVLM). Over 162-184 (VQIARRGLTSTNRTRIMCLSLFW) the chain is Cytoplasmic. The chain crosses the membrane as a helical span at residues 185–203 (HFLDVVWICVFTVVYLMGA). Met-204 is a topological domain (periplasmic).

Belongs to the cytochrome c oxidase subunit 3 family. As to quaternary structure, heterooctamer of two A chains, two B chains, two C chains and two D chains.

Its subcellular location is the cell inner membrane. In terms of biological role, cytochrome bo(3) ubiquinol terminal oxidase is the component of the aerobic respiratory chain of E.coli that predominates when cells are grown at high aeration. Has proton pump activity across the membrane in addition to electron transfer, pumping 2 protons/electron. The chain is Cytochrome bo(3) ubiquinol oxidase subunit 3 (cyoC) from Escherichia coli O6:H1 (strain CFT073 / ATCC 700928 / UPEC).